Consider the following 342-residue polypeptide: NADPH-dependent methylglyoxal reductase GRE2 (342 aa).

NADP(+) is bound by residues 7-12 (GANGFI), Arg-32, Lys-36, 57-58 (DI), Tyr-165, Lys-169, Val-199, and Ser-216. The Proton donor role is filled by Lys-169. The residue at position 333 (Ser-333) is a Phosphoserine.

The protein belongs to the NAD(P)-dependent epimerase/dehydratase family. Dihydroflavonol-4-reductase subfamily. In terms of assembly, monomer. The N-terminus is blocked.

It is found in the cytoplasm. It localises to the nucleus. It catalyses the reaction (S)-lactaldehyde + NADP(+) = methylglyoxal + NADPH + H(+). The enzyme catalyses 3-methylbutanol + NADP(+) = 3-methylbutanal + NADPH + H(+). It carries out the reaction 2,5-hexanedione + 2 NADPH + 2 H(+) = (2S,5S)-hexanediol + 2 NADP(+). The catalysed reaction is (S)-3-chloro-1-phenyl-1-propanol + NADP(+) = 3-chloro-1-phenyl-1-propanone + NADPH + H(+). Its activity is regulated as follows. Activated by glutathione. In terms of biological role, catalyzes the irreversible reduction of the cytotoxic compound methylglyoxal (MG, 2-oxopropanal) to (S)-lactaldehyde as an alternative to detoxification of MG by glyoxalase I GLO1. MG is synthesized via a bypath of glycolysis from dihydroxyacetone phosphate and is believed to play a role in cell cycle regulation and stress adaptation. Also catalyzes the reduction of 3-methylbutanal to 3-methylbutanol. Acts as a suppressor of 3-methylbutanol-induced filamentation by modulating the levels of 3-methylbutanal, the signal to which cells respond by filamentation. Also involved in ergosterol metabolism. The chain is NADPH-dependent methylglyoxal reductase GRE2 (GRE2) from Saccharomyces cerevisiae (strain ATCC 204508 / S288c) (Baker's yeast).